A 579-amino-acid polypeptide reads, in one-letter code: Fatty-acid amide hydrolase 1 (579 aa).

The helical transmembrane segment at 9–29 threads the bilayer; that stretch reads TLSGVSGVCLACSLLSAAVVL. The Cytoplasmic portion of the chain corresponds to 30 to 403; the sequence is RWTGRQKARG…GDFVDPCLGD (374 aa). Lysine 142 (charge relay system) is an active-site residue. Residues methionine 191, serine 217, and 238–241 contribute to the substrate site; that span reads IGGS. Serine 217 serves as the catalytic Charge relay system. The active-site Acyl-ester intermediate is the serine 241. The residue at position 241 (serine 241) is a Phosphoserine. The stretch at 404–433 is an intramembrane region; that stretch reads LILILRLPSWFKRLLSLLLKPLFPRLAAFL. Over 434–579 the chain is Cytoplasmic; it reads NSMRPRSAEK…QLMTPQKQPS (146 aa).

The protein belongs to the amidase family. In terms of assembly, homodimer. Found in neuronal cells throughout the CNS. Expressed in liver and brain, and to a lesser extent in spleen, lung, kidney and testes.

The protein localises to the endoplasmic reticulum membrane. It is found in the golgi apparatus membrane. It carries out the reaction N-(5Z,8Z,11Z,14Z-eicosatetraenoyl)-ethanolamine + H2O = ethanolamine + (5Z,8Z,11Z,14Z)-eicosatetraenoate. The catalysed reaction is (9Z)-octadecenamide + H2O = (9Z)-octadecenoate + NH4(+). The enzyme catalyses 2-(5Z,8Z,11Z,14Z-eicosatetraenoyl)-glycerol + H2O = glycerol + (5Z,8Z,11Z,14Z)-eicosatetraenoate + H(+). It catalyses the reaction (9Z,12Z,15Z)-octadecatrienamide + H2O = (9Z,12Z,15Z)-octadecatrienoate + NH4(+). It carries out the reaction (5Z,8Z,11Z,14Z)-eicosatetraenamide + H2O = (5Z,8Z,11Z,14Z)-eicosatetraenoate + NH4(+). The catalysed reaction is (6Z)-octadecenamide + H2O = (6Z)-octadecenoate + NH4(+). The enzyme catalyses (15Z)-tetracosenamide + H2O = (15Z)-tetracosenoate + NH4(+). It catalyses the reaction (8Z,11Z,14Z)-eicosatrienamide + H2O = (8Z,11Z,14Z)-eicosatrienoate + NH4(+). It carries out the reaction (11Z,14Z,17Z)-eicosatrienamide + H2O = (11Z,14Z,17Z)-eicosatrienoate + NH4(+). The catalysed reaction is (11Z,14Z)-eicosadienamide + H2O = (11Z,14Z)-eicosadienoate + NH4(+). The enzyme catalyses (9Z,12Z)-octadecadienamide + H2O = (9Z,12Z)-octadecadienoate + NH4(+). It catalyses the reaction tetradecamide + H2O = tetradecanoate + NH4(+). It carries out the reaction N-(9Z-octadecenoyl) ethanolamine + H2O = ethanolamine + (9Z)-octadecenoate. The catalysed reaction is N-(9Z-octadecenoyl)-taurine + H2O = taurine + (9Z)-octadecenoate. The enzyme catalyses 1-O-methyl-(5Z,8Z,11Z,14Z)-eicosatetraenoate + H2O = methanol + (5Z,8Z,11Z,14Z)-eicosatetraenoate + H(+). It catalyses the reaction (11Z)-eicosenamide + H2O = (11Z)-eicosenoate + NH4(+). It carries out the reaction N-(9Z-hexadecenoyl) ethanolamine + H2O = (9Z)-hexadecenoate + ethanolamine. The catalysed reaction is N-octadecanoyl ethanolamine + H2O = octadecanoate + ethanolamine. The enzyme catalyses N-docosanoyl-ethanolamine + H2O = docosanoate + ethanolamine. It catalyses the reaction N-tetracosanoyl-taurine + H2O = tetracosanoate + taurine. It carries out the reaction N-(15Z-tetracosenoyl)-ethanolamine + H2O = (15Z)-tetracosenoate + ethanolamine. The catalysed reaction is N-docosanoyl-taurine + H2O = docosanoate + taurine. The enzyme catalyses N-(15Z-tetracosenoyl)-taurine + H2O = (15Z)-tetracosenoate + taurine. It catalyses the reaction N-tricosanoyl-taurine + H2O = tricosanoate + taurine. It carries out the reaction (9Z)-octadecenoate + glycine = N-(9Z-octadecenoyl)glycine + H2O. The catalysed reaction is N-(5Z,8Z,11Z,14Z)-eicosatetraenoyl-glycine + H2O = (5Z,8Z,11Z,14Z)-eicosatetraenoate + glycine. The enzyme catalyses N-(5Z,8Z,11Z,14Z-eicosatetraenoyl)-L-serine + H2O = (5Z,8Z,11Z,14Z)-eicosatetraenoate + L-serine. Its activity is regulated as follows. inhibited by trifluoromethyl ketone. Functionally, catalyzes the hydrolysis of endogenous amidated lipids like the sleep-inducing lipid oleamide ((9Z)-octadecenamide), the endocannabinoid anandamide (N-(5Z,8Z,11Z,14Z-eicosatetraenoyl)-ethanolamine), as well as other fatty amides, to their corresponding fatty acids, thereby regulating the signaling functions of these molecules. Hydrolyzes polyunsaturated substrate anandamide preferentially as compared to monounsaturated substrates. It can also catalyze the hydrolysis of the endocannabinoid 2-arachidonoylglycerol (2-(5Z,8Z,11Z,14Z-eicosatetraenoyl)-glycerol). FAAH cooperates with PM20D1 in the hydrolysis of amino acid-conjugated fatty acids such as N-fatty acyl glycine and N-fatty acyl-L-serine, thereby acting as a physiological regulator of specific subsets of intracellular, but not of extracellular, N-fatty acyl amino acids. The chain is Fatty-acid amide hydrolase 1 (Faah) from Rattus norvegicus (Rat).